Consider the following 568-residue polypeptide: 2-succinyl-5-enolpyruvyl-6-hydroxy-3-cyclohexene-1-carboxylate synthase (568 aa).

It belongs to the TPP enzyme family. MenD subfamily. Homodimer. The cofactor is Mg(2+). Requires Mn(2+) as cofactor. Thiamine diphosphate serves as cofactor.

It carries out the reaction isochorismate + 2-oxoglutarate + H(+) = 5-enolpyruvoyl-6-hydroxy-2-succinyl-cyclohex-3-ene-1-carboxylate + CO2. Its pathway is quinol/quinone metabolism; 1,4-dihydroxy-2-naphthoate biosynthesis; 1,4-dihydroxy-2-naphthoate from chorismate: step 2/7. It participates in quinol/quinone metabolism; menaquinone biosynthesis. Its function is as follows. Catalyzes the thiamine diphosphate-dependent decarboxylation of 2-oxoglutarate and the subsequent addition of the resulting succinic semialdehyde-thiamine pyrophosphate anion to isochorismate to yield 2-succinyl-5-enolpyruvyl-6-hydroxy-3-cyclohexene-1-carboxylate (SEPHCHC). This Actinobacillus pleuropneumoniae serotype 3 (strain JL03) protein is 2-succinyl-5-enolpyruvyl-6-hydroxy-3-cyclohexene-1-carboxylate synthase.